The sequence spans 477 residues: Bifunctional protein HldE (477 aa).

The segment at 1 to 318 is ribokinase; sequence MKVNLPAFER…ENAVRGRADT (318 aa). 195–198 serves as a coordination point for ATP; the sequence is NLSE. Asp-264 is an active-site residue. Residues 344–477 form a cytidylyltransferase region; that stretch reads MTNGVFDILH…IKKIQTESEK (134 aa).

It in the N-terminal section; belongs to the carbohydrate kinase PfkB family. The protein in the C-terminal section; belongs to the cytidylyltransferase family. Homodimer.

The catalysed reaction is D-glycero-beta-D-manno-heptose 7-phosphate + ATP = D-glycero-beta-D-manno-heptose 1,7-bisphosphate + ADP + H(+). The enzyme catalyses D-glycero-beta-D-manno-heptose 1-phosphate + ATP + H(+) = ADP-D-glycero-beta-D-manno-heptose + diphosphate. Its pathway is nucleotide-sugar biosynthesis; ADP-L-glycero-beta-D-manno-heptose biosynthesis; ADP-L-glycero-beta-D-manno-heptose from D-glycero-beta-D-manno-heptose 7-phosphate: step 1/4. It participates in nucleotide-sugar biosynthesis; ADP-L-glycero-beta-D-manno-heptose biosynthesis; ADP-L-glycero-beta-D-manno-heptose from D-glycero-beta-D-manno-heptose 7-phosphate: step 3/4. Catalyzes the phosphorylation of D-glycero-D-manno-heptose 7-phosphate at the C-1 position to selectively form D-glycero-beta-D-manno-heptose-1,7-bisphosphate. In terms of biological role, catalyzes the ADP transfer from ATP to D-glycero-beta-D-manno-heptose 1-phosphate, yielding ADP-D-glycero-beta-D-manno-heptose. This chain is Bifunctional protein HldE, found in Salmonella paratyphi A (strain ATCC 9150 / SARB42).